The sequence spans 466 residues: Delta-1 crystallin (466 aa).

Belongs to the lyase 1 family. Argininosuccinate lyase subfamily. As to quaternary structure, homotetramer. In terms of tissue distribution, eye lens.

Functionally, delta crystallin, the principal crystallin in embryonic lens, is found only in birds and reptiles. Despite possessing the necessary catalytic residues, this protein does not function as an enzymatically active argininosuccinate lyase. The protein is Delta-1 crystallin (ASL1) of Anas platyrhynchos (Mallard).